The chain runs to 347 residues: 3-isopropylmalate dehydrogenase (347 aa).

R94, R104, R128, and D219 together coordinate substrate. 3 residues coordinate Mg(2+): D219, D243, and D247. 279–291 (GSAPDIAGQGKAD) is a binding site for NAD(+).

The protein belongs to the isocitrate and isopropylmalate dehydrogenases family. LeuB type 2 subfamily. Homodimer. Mg(2+) is required as a cofactor. It depends on Mn(2+) as a cofactor.

Its subcellular location is the cytoplasm. It catalyses the reaction (2R,3S)-3-isopropylmalate + NAD(+) = 4-methyl-2-oxopentanoate + CO2 + NADH. It functions in the pathway amino-acid biosynthesis; L-leucine biosynthesis; L-leucine from 3-methyl-2-oxobutanoate: step 3/4. Its function is as follows. Catalyzes the oxidation of 3-carboxy-2-hydroxy-4-methylpentanoate (3-isopropylmalate) to 3-carboxy-4-methyl-2-oxopentanoate. The product decarboxylates to 4-methyl-2 oxopentanoate. The protein is 3-isopropylmalate dehydrogenase of Streptomyces avermitilis (strain ATCC 31267 / DSM 46492 / JCM 5070 / NBRC 14893 / NCIMB 12804 / NRRL 8165 / MA-4680).